The primary structure comprises 188 residues: Putative manganese efflux pump MntP (188 aa).

Transmembrane regions (helical) follow at residues 3-23, 39-59, 65-85, 104-124, 125-145, and 167-187; these read WLTI…VALA, LGFH…LLGM, ISAY…GRMV, GMTM…VGLS, IAML…VAGV, and ICGG…HTLL.

It belongs to the MntP (TC 9.B.29) family.

It is found in the cell inner membrane. Functionally, probably functions as a manganese efflux pump. This Citrifermentans bemidjiense (strain ATCC BAA-1014 / DSM 16622 / JCM 12645 / Bem) (Geobacter bemidjiensis) protein is Putative manganese efflux pump MntP.